We begin with the raw amino-acid sequence, 37 residues long: MKIRASVRKICEKCQLIRRRGRILVICSNPRHKQRQG.

Belongs to the bacterial ribosomal protein bL36 family.

It localises to the plastid. Its subcellular location is the chloroplast. The protein is Large ribosomal subunit protein bL36c of Chloranthus spicatus (Chulantree).